The primary structure comprises 492 residues: N-succinylglutamate 5-semialdehyde dehydrogenase (492 aa).

Residue Gly-220–Gly-225 participates in NAD(+) binding. Catalysis depends on residues Glu-243 and Cys-277.

It belongs to the aldehyde dehydrogenase family. AstD subfamily.

It catalyses the reaction N-succinyl-L-glutamate 5-semialdehyde + NAD(+) + H2O = N-succinyl-L-glutamate + NADH + 2 H(+). It functions in the pathway amino-acid degradation; L-arginine degradation via AST pathway; L-glutamate and succinate from L-arginine: step 4/5. In terms of biological role, catalyzes the NAD-dependent reduction of succinylglutamate semialdehyde into succinylglutamate. The sequence is that of N-succinylglutamate 5-semialdehyde dehydrogenase from Escherichia coli O157:H7.